A 464-amino-acid chain; its full sequence is Transcription factor EAT1 (464 aa).

The interval 261 to 274 (GKGKANFATERERR) is basic motif; degenerate. Positions 261–310 (GKGKANFATERERREQLNVKFRTLRMLFPNPTKNDRASIVGDAIEYIDEL) constitute a bHLH domain. A helix-loop-helix motif region spans residues 275–310 (EQLNVKFRTLRMLFPNPTKNDRASIVGDAIEYIDEL). Positions 338 to 357 (QEAAADGESSSMRPVRDDQD) are disordered.

This sequence belongs to the bHLH protein family. Interacts with TDR.

The protein resides in the nucleus. Its function is as follows. Transcription factor involved in the regulation of tapetum programmed cell death (PCD) and degradation during male reproductive development. Interacts with TDR and promote tapetal PCD by regulating the expression of RTS, and the two lipid-transfer proteins C4 and C6, which function in microspore development. Acts downstream from and interacts with TDR in the regulation of tapetal PCD. Regulates directly the aspartic protease AP25 and AP37 during tapetal PCD. May not target the cysteine protease CP1. In Oryza sativa subsp. japonica (Rice), this protein is Transcription factor EAT1.